Consider the following 463-residue polypeptide: Elongation factor 1-alpha 1 (463 aa).

The region spanning 5–242 (KIHINIVVIG…DAILPPARPT (238 aa)) is the tr-type G domain. The interval 14-21 (GHVDSGKS) is G1. 14–21 (GHVDSGKS) lines the GTP pocket. The segment at 70 to 74 (GITID) is G2. Positions 91 to 94 (DAPG) are G3. Residues 91 to 95 (DAPGH) and 153 to 156 (NKMD) contribute to the GTP site. The segment at 153–156 (NKMD) is G4. The interval 194–196 (SGW) is G5. 2 positions are modified to 5-glutamyl glycerylphosphorylethanolamine: Glu-301 and Glu-374.

It belongs to the TRAFAC class translation factor GTPase superfamily. Classic translation factor GTPase family. EF-Tu/EF-1A subfamily.

Its subcellular location is the cytoplasm. Its function is as follows. This protein promotes the GTP-dependent binding of aminoacyl-tRNA to the A-site of ribosomes during protein biosynthesis. In Drosophila melanogaster (Fruit fly), this protein is Elongation factor 1-alpha 1.